We begin with the raw amino-acid sequence, 339 residues long: Erlin-2 (339 aa).

The Cytoplasmic segment spans residues 1 to 3 (MAQ). A helical transmembrane segment spans residues 4–24 (LGAVVAVASSFFCASLFSAVH). Residues 25-339 (KIEEGHIGVY…EPLETATKDN (315 aa)) are Extracellular-facing. Asparagine 106 carries an N-linked (GlcNAc...) asparagine glycan. The interaction with ERLIN1 stretch occupies residues 177-309 (EAIRRNYELM…DIPNMFMDSA (133 aa)). An N6-acetyllysine modification is found at lysine 267.

It belongs to the band 7/mec-2 family. As to quaternary structure, forms a heteromeric complex with ERLIN1. In complex with ERLIN1, interacts with RNF170. Interacts with activated ITPR1, independently of the degree of ITPR1 polyubiquitination. Interacts with SCAP, INSIG1, SREBF1 and SREBF2 under cholesterol sufficiency conditions; indicative for an association with the SCAP-SREBP-INSIG complex. Probably part of an AMFR/gp78 and INSIG1-containing ubiquitin ligase complex involved in ERAD of HMGCR. Interacts with TMUB1; TMUB1 bridges the association with AMFR. Interacts with SYVN1 and RNF139. Interacts with TMEM259. Interacts with TMEM41B. In terms of processing, deubiquitinated by USP25; leading to stabilization.

Its subcellular location is the endoplasmic reticulum membrane. Its function is as follows. Component of the ERLIN1/ERLIN2 complex which mediates the endoplasmic reticulum-associated degradation (ERAD) of inositol 1,4,5-trisphosphate receptors (IP3Rs) such as ITPR1. Promotes sterol-accelerated ERAD of HMGCR probably implicating an AMFR/gp78-containing ubiquitin ligase complex. Involved in regulation of cellular cholesterol homeostasis by regulation the SREBP signaling pathway. May promote ER retention of the SCAP-SREBF complex. The protein is Erlin-2 of Rattus norvegicus (Rat).